Consider the following 86-residue polypeptide: Anti-adapter protein IraP (86 aa).

Residues 1-42 (MKNLIAELLVKLAQKEEESKELVAQVEALEIVVTALLRQMAQ) adopt a coiled-coil conformation.

It belongs to the IraP family. In terms of assembly, interacts with RssB.

The protein resides in the cytoplasm. Functionally, inhibits RpoS proteolysis by regulating RssB activity, thereby increasing the stability of the sigma stress factor RpoS especially during phosphate starvation, but also in stationary phase and during nitrogen starvation. Its effect on RpoS stability is due to its interaction with RssB, which probably blocks the interaction of RssB with RpoS, and the consequent delivery of the RssB-RpoS complex to the ClpXP protein degradation pathway. This chain is Anti-adapter protein IraP, found in Enterobacter sp. (strain 638).